The following is a 356-amino-acid chain: 3-isopropylmalate dehydrogenase (356 aa).

73–86 contacts NAD(+); it reads GTQYDGLPREKRPE. Arg93, Arg103, Arg131, and Asp220 together coordinate substrate. Mg(2+) is bound by residues Asp220, Asp244, and Asp248. 278–290 lines the NAD(+) pocket; it reads GSAPDIAGKGIAN.

It belongs to the isocitrate and isopropylmalate dehydrogenases family. LeuB type 1 subfamily. In terms of assembly, homodimer. It depends on Mg(2+) as a cofactor. The cofactor is Mn(2+).

It is found in the cytoplasm. It carries out the reaction (2R,3S)-3-isopropylmalate + NAD(+) = 4-methyl-2-oxopentanoate + CO2 + NADH. Its pathway is amino-acid biosynthesis; L-leucine biosynthesis; L-leucine from 3-methyl-2-oxobutanoate: step 3/4. Its function is as follows. Catalyzes the oxidation of 3-carboxy-2-hydroxy-4-methylpentanoate (3-isopropylmalate) to 3-carboxy-4-methyl-2-oxopentanoate. The product decarboxylates to 4-methyl-2 oxopentanoate. This is 3-isopropylmalate dehydrogenase from Nitrosomonas europaea (strain ATCC 19718 / CIP 103999 / KCTC 2705 / NBRC 14298).